Here is a 595-residue protein sequence, read N- to C-terminus: UvrABC system protein C (595 aa).

Residues 17–94 (FEPGCYLMKD…IKQYQPRYNI (78 aa)) enclose the GIY-YIG domain. Residues 199-234 (KTIIKNLESRMQAASENLEFEQAKEYRDLIQNIHNL) form the UVR domain.

This sequence belongs to the UvrC family. In terms of assembly, interacts with UvrB in an incision complex.

It localises to the cytoplasm. The UvrABC repair system catalyzes the recognition and processing of DNA lesions. UvrC both incises the 5' and 3' sides of the lesion. The N-terminal half is responsible for the 3' incision and the C-terminal half is responsible for the 5' incision. This Staphylococcus carnosus (strain TM300) protein is UvrABC system protein C.